Consider the following 152-residue polypeptide: Clitocypin-5 (152 aa).

Homodimer.

Binds and inhibits cysteine proteinases. Inhibits most strongly papain and cathepsin L, more weakly bromelain and cathepsin B while it is completely ineffective against cathepsin H. The polypeptide is Clitocypin-5 (clt5) (Clitocybe nebularis (Clouded agaric)).